A 393-amino-acid chain; its full sequence is Probable WRKY transcription factor 25 (393 aa).

A DNA-binding region (WRKY 1) is located at residues 160-224; the sequence is MVSRNSNDGY…YKGGHNHPKP (65 aa). Zn(2+) is bound by residues cysteine 191, cysteine 196, histidine 219, and histidine 221. Disordered regions lie at residues 217–242 and 277–303; these read GGHNHPKPEFTKRPSQSSLPSSVNGR and SEYGEIDEEEEQPEMKRMKREGEDEGM. Residues 229–240 are compositionally biased toward polar residues; it reads RPSQSSLPSSVN. Positions 289–298 are enriched in basic and acidic residues; the sequence is PEMKRMKREG. The WRKY 2 DNA-binding region spans 322–387; sequence SDIDVLIDGF…YEGRHNHDIP (66 aa). Residues cysteine 353, cysteine 358, histidine 382, and histidine 384 each coordinate Zn(2+).

Belongs to the WRKY group I family. As to quaternary structure, interacts with MKS1. Interacts with SIB1. Interacts with VQ10 and CAMBP25/VQ15. Post-translationally, phosphorylated by MPK4. Highly expressed in roots and at lower levels in leaves, stems and seeds.

Its subcellular location is the nucleus. Its function is as follows. Transcription factor. Interacts specifically with the W box (5'-(T)TGAC[CT]-3'), a frequently occurring elicitor-responsive cis-acting element. Functions with WRKY33 as positive regulator of salt stress response and abscisic acid (ABA) signaling. Plays a partial role in heat stress tolerance. Functions with WRKY26 and WRKY33 as positive regulator of plant thermotolerance by partially participating in ethylene-response signal transduction pathway. In Arabidopsis thaliana (Mouse-ear cress), this protein is Probable WRKY transcription factor 25 (WRKY25).